Consider the following 848-residue polypeptide: Phosphatidate phosphatase LPIN3 (848 aa).

The tract at residues 1–108 (MNYVGQLAET…VPPRLCTSPI (108 aa)) is N-LIP. Disordered regions lie at residues 97-233 (EDVP…SPLR), 271-298 (PEEP…PGVR), and 314-373 (AVDS…NQHL). Positions 135–144 (GRRKRRRRRK) match the Nuclear localization signal motif. Basic residues predominate over residues 135–146 (GRRKRRRRRKPR). Positions 151–164 (DAVDSSSEELEAGA) are enriched in acidic residues. Residues S155 and S156 each carry the phosphoserine modification. Residues 165–191 (ESELTLLEKPTPESPSAQEAEEPSSQP) are compositionally biased toward low complexity. The residue at position 218 (S218) is a Phosphoserine. A compositionally biased stretch (low complexity) spans 271-282 (PEEPSPSSSPSE). Positions 342 to 358 (KSWSWTTPESHTPSGHP) are enriched in polar residues. S460 is subject to Phosphoserine. Positions 536-556 (EEHSSQREKAATRKQQGEKTE) are enriched in basic and acidic residues. Residues 536-568 (EEHSSQREKAATRKQQGEKTEVLSSDDDVPDSP) form a disordered region. The segment at 587–789 (YKKSLRLSSD…RIFTVNPRGE (203 aa)) is C-LIP. The DXDXT motif signature appears at 641-645 (DIDGT). The short motif at 652-656 (LGHIL) is the LXXIL motif element.

It belongs to the lipin family. Requires Mg(2+) as cofactor. Significant expression in intestine and other regions of the gastrointestinal tract.

It localises to the nucleus. The catalysed reaction is a 1,2-diacyl-sn-glycero-3-phosphate + H2O = a 1,2-diacyl-sn-glycerol + phosphate. With respect to regulation, inhibited by N-ethylmaleimide. Its function is as follows. Magnesium-dependent phosphatidate phosphatase enzyme which catalyzes the conversion of phosphatidic acid to diacylglycerol during triglyceride, phosphatidylcholine and phosphatidylethanolamine biosynthesis therefore regulates fatty acid metabolism. This is Phosphatidate phosphatase LPIN3 from Mus musculus (Mouse).